The sequence spans 246 residues: tRNA (guanine-N(1)-)-methyltransferase (246 aa).

S-adenosyl-L-methionine contacts are provided by residues Gly-114 and 134-139 (IGDYIL). Residues 219–231 (LRRPDLWERHEGA) show a composition bias toward basic and acidic residues. The interval 219–246 (LRRPDLWERHEGARAQSPSGARRQKKER) is disordered.

It belongs to the RNA methyltransferase TrmD family. In terms of assembly, homodimer.

The protein resides in the cytoplasm. It carries out the reaction guanosine(37) in tRNA + S-adenosyl-L-methionine = N(1)-methylguanosine(37) in tRNA + S-adenosyl-L-homocysteine + H(+). Its function is as follows. Specifically methylates guanosine-37 in various tRNAs. This Rhizorhabdus wittichii (strain DSM 6014 / CCUG 31198 / JCM 15750 / NBRC 105917 / EY 4224 / RW1) (Sphingomonas wittichii) protein is tRNA (guanine-N(1)-)-methyltransferase.